Here is a 523-residue protein sequence, read N- to C-terminus: Sensory neuron membrane protein 1 (523 aa).

Over 1–11 (MQLPKELKYAA) the chain is Cytoplasmic. The chain crosses the membrane as a helical span at residues 12–32 (IAGGVALFGLIFGWVLFPTIL). The Extracellular segment spans residues 33-458 (KSQLKKEMAL…HQLFIPKRVV (426 aa)). N-linked (GlcNAc...) asparagine glycosylation is found at asparagine 67 and asparagine 229. 3 disulfide bridges follow: cysteine 268/cysteine 333, cysteine 297/cysteine 352, and cysteine 335/cysteine 341. Asparagine 440 carries an N-linked (GlcNAc...) asparagine glycan. A helical transmembrane segment spans residues 459–479 (GVLRWWVVSFGSLGAVIGIVF). Topologically, residues 480-523 (HFRDHIMRLAVSGDTKVSKVTPEEPEQKDISVIGQAQEPAKVNI) are cytoplasmic.

It belongs to the CD36 family. As to expression, detected in sensory neurons in the antenna.

It is found in the cell membrane. Plays an olfactory role that is not restricted to pheromone sensitivity. The protein is Sensory neuron membrane protein 1 of Heliothis virescens (Tobacco budworm moth).